We begin with the raw amino-acid sequence, 327 residues long: Neurogenic differentiation factor 6-A (327 aa).

The tract at residues 17–85 (GANFPRDCVG…KKMTKARVDR (69 aa)) is disordered. Residues 24–46 (CVGDLKGNKQEPFEKEETLSHVM) are compositionally biased toward basic and acidic residues. Residues 47-63 (DDDDSEKDEDEREDGQD) are compositionally biased toward acidic residues. Over residues 68-80 (PRRRGPRKKKMTK) the composition is skewed to basic residues. Positions 74–80 (RKKKMTK) match the Nuclear localization signal motif. A bHLH domain is found at 88–140 (VRRMEANARERNRMHGLNNALDSLRKVVPCYSKTQKLSKIETLRLAKNYIWAL).

As to quaternary structure, efficient DNA binding requires dimerization with another bHLH protein. As to expression, embryonic olfactory bulbs. In adult, expressed in brain, eye, intestine, muscle, ovary and skin.

It localises to the nucleus. In terms of biological role, differentiation factor required for neurogenesis. Acts as an upstream activator of isl1. The sequence is that of Neurogenic differentiation factor 6-A from Danio rerio (Zebrafish).